Consider the following 317-residue polypeptide: Ribose-phosphate pyrophosphokinase (317 aa).

Residues D41–E43 and R100–Q101 contribute to the ATP site. Residues H134 and D174 each coordinate Mg(2+). K197 is an active-site residue. D-ribose 5-phosphate-binding positions include R199, D223, and D227–T231.

It belongs to the ribose-phosphate pyrophosphokinase family. Class I subfamily. Homohexamer. The cofactor is Mg(2+).

Its subcellular location is the cytoplasm. It carries out the reaction D-ribose 5-phosphate + ATP = 5-phospho-alpha-D-ribose 1-diphosphate + AMP + H(+). It functions in the pathway metabolic intermediate biosynthesis; 5-phospho-alpha-D-ribose 1-diphosphate biosynthesis; 5-phospho-alpha-D-ribose 1-diphosphate from D-ribose 5-phosphate (route I): step 1/1. Functionally, involved in the biosynthesis of the central metabolite phospho-alpha-D-ribosyl-1-pyrophosphate (PRPP) via the transfer of pyrophosphoryl group from ATP to 1-hydroxyl of ribose-5-phosphate (Rib-5-P). In Bradyrhizobium diazoefficiens (strain JCM 10833 / BCRC 13528 / IAM 13628 / NBRC 14792 / USDA 110), this protein is Ribose-phosphate pyrophosphokinase.